Here is a 485-residue protein sequence, read N- to C-terminus: UDP-N-acetylmuramate--L-alanine ligase (485 aa).

120-126 (GSHGKTT) contributes to the ATP binding site.

The protein belongs to the MurCDEF family.

Its subcellular location is the cytoplasm. The catalysed reaction is UDP-N-acetyl-alpha-D-muramate + L-alanine + ATP = UDP-N-acetyl-alpha-D-muramoyl-L-alanine + ADP + phosphate + H(+). It functions in the pathway cell wall biogenesis; peptidoglycan biosynthesis. Cell wall formation. This Rickettsia rickettsii (strain Iowa) protein is UDP-N-acetylmuramate--L-alanine ligase.